The following is a 273-amino-acid chain: Homeobox protein Nkx-2.2 (273 aa).

Disordered regions lie at residues 1–56 and 90–131; these read MSLT…LDAV and LAAG…KRKR. The span at 20 to 38 shows a compositional bias: acidic residues; that stretch reads DTNDEEGSVAEGPEEENEG. Positions 128–187 form a DNA-binding region, homeobox; sequence KRKRRVLFSKAQTYELERRFRQQRYLSAPEREHLASLIRLTPTQVKIWFQNHRYKMKRAR.

The protein belongs to the NK-2 homeobox family. In terms of assembly, interacts with OLIG2.

It localises to the nucleus. Transcriptional activator involved in the development of insulin-producting beta cells in the endocrine pancreas. May also be involved in specifying diencephalic neuromeric boundaries, and in controlling the expression of genes that play a role in axonal guidance. Binds to elements within the NEUROD1 promoter. The polypeptide is Homeobox protein Nkx-2.2 (NKX2-2) (Homo sapiens (Human)).